The chain runs to 342 residues: Cyclin pch1 (342 aa).

The interval 261 to 342 is disordered; that stretch reads LPIDQKNGSH…TDKEMETEAS (82 aa). The segment covering 278–314 has biased composition (polar residues); the sequence is TPSSLASVSTQATPQHQNSSGRTDSFHSLNTETPSKS. Phosphothreonine is present on Thr-300. Ser-302 is subject to Phosphoserine. Positions 329–342 are enriched in basic and acidic residues; it reads KSSDTDKEMETEAS.

The protein belongs to the cyclin family. Cyclin C subfamily. As to quaternary structure, interacts with cdc2 protein kinase and with the N-terminal domain of cdk9.

The protein resides in the nucleus. Functionally, essential for progression through the whole cell cycle. The protein is Cyclin pch1 (pch1) of Schizosaccharomyces pombe (strain 972 / ATCC 24843) (Fission yeast).